An 89-amino-acid polypeptide reads, in one-letter code: Small ribosomal subunit protein uS15 (89 aa).

The segment at 1 to 24 (MALTQTKKQELISQYQAHETDTGS) is disordered.

This sequence belongs to the universal ribosomal protein uS15 family. In terms of assembly, part of the 30S ribosomal subunit. Forms a bridge to the 50S subunit in the 70S ribosome, contacting the 23S rRNA.

One of the primary rRNA binding proteins, it binds directly to 16S rRNA where it helps nucleate assembly of the platform of the 30S subunit by binding and bridging several RNA helices of the 16S rRNA. In terms of biological role, forms an intersubunit bridge (bridge B4) with the 23S rRNA of the 50S subunit in the ribosome. The chain is Small ribosomal subunit protein uS15 from Microcystis aeruginosa (strain NIES-843 / IAM M-2473).